We begin with the raw amino-acid sequence, 535 residues long: Dual specificity calcium/calmodulin-dependent 3',5'-cyclic nucleotide phosphodiesterase 1A (535 aa).

Calmodulin-binding regions lie at residues 24–44 (TEKM…QLER) and 114–137 (EKPK…MYRK). Residues 142–522 (VGLAYPAAVI…ERWKELAAQE (381 aa)) enclose the PDEase domain. The active-site Proton donor is the H219. 4 residues coordinate Zn(2+): H223, H259, D260, and D366. D260 contacts Mg(2+).

It belongs to the cyclic nucleotide phosphodiesterase family. PDE1 subfamily. As to quaternary structure, homodimer. Interacts with YWHAZ. Zn(2+) serves as cofactor. It depends on Mg(2+) as a cofactor. As to expression, several tissues, including brain, kidney, testes and heart.

It carries out the reaction a nucleoside 3',5'-cyclic phosphate + H2O = a nucleoside 5'-phosphate + H(+). The catalysed reaction is 3',5'-cyclic GMP + H2O = GMP + H(+). The enzyme catalyses 3',5'-cyclic AMP + H2O = AMP + H(+). Type I PDE are activated by the binding of calmodulin in the presence of Ca(2+). In terms of biological role, calcium/calmodulin-dependent cyclic nucleotide phosphodiesterase with a dual specificity for the second messengers cGMP and cAMP, which are key regulators of many important physiological processes. Has a higher efficiency with cGMP compared to cAMP. This chain is Dual specificity calcium/calmodulin-dependent 3',5'-cyclic nucleotide phosphodiesterase 1A, found in Homo sapiens (Human).